The following is a 189-amino-acid chain: Streptothricin acetyltransferase (189 aa).

In terms of domain architecture, N-acetyltransferase spans 44-189 (FALREVPADP…HALYMSMPCP (146 aa)). The segment at 55–76 (LVKVFPDDGGSDGEDGAEGEDA) is disordered. A compositionally biased stretch (acidic residues) spans 63–75 (GGSDGEDGAEGED).

It belongs to the acetyltransferase family. GNAT subfamily.

It carries out the reaction streptothricin F + acetyl-CoA = N(beta)-acetylstreptothricin F + CoA + H(+). Involved in resistance to streptothricin, a broad-spectrum antibiotic produced by streptomycetes. Detoxifies streptothricin via acetylation of the beta amino group of the first beta-lysyl moiety of streptothricin. In Streptomyces lavendulae, this protein is Streptothricin acetyltransferase.